A 260-amino-acid polypeptide reads, in one-letter code: Achaete-scute homolog 2 (260 aa).

Disordered regions lie at residues 85 to 126 and 191 to 239; these read AGAC…RNER and PATR…EDSS. 2 stretches are compositionally biased toward low complexity: residues 110–121 and 200–218; these read ATEASSSSAAVA and TQPS…STSP. The bHLH domain maps to 118 to 170; the sequence is AAVARRNERERNRVKLVNLGFQALRQHVPHGGANKKLSKVETLRSAVEYIRAL.

In terms of assembly, efficient DNA binding requires dimerization with another bHLH protein. Forms heterodimers with bHLH transcription factor TCF3. May not heterodimerise with bHLH protein HAND1. In terms of tissue distribution, expressed in Schwann cells in the peripheral nerve (at protein level). Also expressed by endothelial cells (at protein level). May be expressed in neuronal precursor cells.

It localises to the nucleus. The protein localises to the cytoplasm. Transcription factor. Binds to E-box motifs 5'-CANNTG-3' in the regulatory elements of target genes, probably as a heterodimer with another basic helix-loop-helix (bHLH) protein such as the transcription factor TCF3. May bind both open and closed chromatin, acting as a pioneer transcription factor to allow other factors to bind and activate lineage-specific genes. Required during post-implantation development for the generation of some differentiated trophoblast cell types. Transcriptional activity of ASCL2 may be antagonised in a subset of trophoblast cells by bHLH transcription factor HAND1, perhaps by competing for dimerization with other bHLH proteins. Involved in differentiation and function of follicular T-helper (Tfh) cells, thereby playing a role in germinal center responses; probably modulates expression of genes involved in Tfh cell function, such as BCL6. May also act as a suppressor of Th1-, Th2- and Th17-cell differentiation. Induces the formation of stem cells in intestinal crypts in vitro, synergistically activating transcription of target genes, such as SOX9, together with TCF4/beta-catenin. May form a bistable transcriptional switch, controlling expression of its own gene together with Wnt/R-spondin signaling, and thereby maintaining stem cell characteristics. Modulates expression of target genes, including perhaps down-regulating EGR1/Krox24 and chemokine CXCL10/Mob-1 and up-regulating CXCR4 and CDKN1C/p57kip2, in Schwann cells. May play a role in reducing proliferation of Schwann cells, perhaps acting via modulation of expression of CDKN1C. May be dispensable for blastocyst formation and later embryonic function. May be involved in the determination of neuronal precursors. This chain is Achaete-scute homolog 2 (Ascl2), found in Rattus norvegicus (Rat).